A 525-amino-acid polypeptide reads, in one-letter code: Coronin-2A (525 aa).

WD repeat units follow at residues 80 to 120 (GHRG…LTKN), 130 to 170 (GHAR…SVIM), 178 to 217 (CHQDVILSMSFNTNGSLLATACKDRKIRVLDPRAGTVLQE), 220 to 263 (YKGH…VPVT), and 269 to 308 (GSSGVLFPFYDADTNMLYVVGKGDRNIHYYEISANKPHLN). The stretch at 485–524 (QMFYRQQDEIRRLRELVTQREVQAKQLELEIRNLRMNSPR) forms a coiled coil.

This sequence belongs to the WD repeat coronin family. In terms of assembly, binds actin. Component of the N-Cor repressor complex, at least composed of NCOR1, NCOR2, HDAC3, TBL1X, TBL1R, CORO2A and GPS2.

This Bos taurus (Bovine) protein is Coronin-2A (CORO2A).